The chain runs to 320 residues: o-succinylbenzoate synthase (320 aa).

The Proton donor role is filled by Lys-133. 3 residues coordinate Mg(2+): Asp-161, Glu-190, and Asp-213. Lys-235 serves as the catalytic Proton acceptor.

The protein belongs to the mandelate racemase/muconate lactonizing enzyme family. MenC type 1 subfamily. Requires a divalent metal cation as cofactor.

It catalyses the reaction (1R,6R)-6-hydroxy-2-succinyl-cyclohexa-2,4-diene-1-carboxylate = 2-succinylbenzoate + H2O. The protein operates within quinol/quinone metabolism; 1,4-dihydroxy-2-naphthoate biosynthesis; 1,4-dihydroxy-2-naphthoate from chorismate: step 4/7. Its pathway is quinol/quinone metabolism; menaquinone biosynthesis. Converts 2-succinyl-6-hydroxy-2,4-cyclohexadiene-1-carboxylate (SHCHC) to 2-succinylbenzoate (OSB). The polypeptide is o-succinylbenzoate synthase (Escherichia coli O45:K1 (strain S88 / ExPEC)).